The chain runs to 288 residues: Geranylgeranyl diphosphate synthase (288 aa).

Residues R43 and H73 each contribute to the isopentenyl diphosphate site. Mg(2+) is bound by residues D80 and D86. R91 is a binding site for (2E,6E)-farnesyl diphosphate. An isopentenyl diphosphate-binding site is contributed by R92. (2E,6E)-farnesyl diphosphate contacts are provided by K170, T171, and Q205.

The protein belongs to the FPP/GGPP synthase family. Mg(2+) is required as a cofactor.

It carries out the reaction isopentenyl diphosphate + (2E,6E)-farnesyl diphosphate = (2E,6E,10E)-geranylgeranyl diphosphate + diphosphate. It functions in the pathway isoprenoid biosynthesis; geranylgeranyl diphosphate biosynthesis; geranylgeranyl diphosphate from farnesyl diphosphate and isopentenyl diphosphate: step 1/1. Catalyzes the condensation of farnesyl diphosphate (FPP) and isopentenyl diphosphate (IPP) to yield geranylgeranyl diphosphate (GGPP) needed for biosynthesis of carotenoids and diterpenes. This chain is Geranylgeranyl diphosphate synthase (crtE), found in Cereibacter sphaeroides (strain ATCC 17023 / DSM 158 / JCM 6121 / CCUG 31486 / LMG 2827 / NBRC 12203 / NCIMB 8253 / ATH 2.4.1.) (Rhodobacter sphaeroides).